Here is a 290-residue protein sequence, read N- to C-terminus: Ribosome-inactivating protein bryodin I (290 aa).

An N-terminal signal peptide occupies residues 1 to 23 (MIKLLVLWLLILTIFLKSPTVEG). Active-site residues include Glu-183 and Glu-212. N-linked (GlcNAc...) asparagine glycosylation is found at Asn-214 and Asn-250. A propeptide spans 271 to 290 (AIGEDISMTLIGFEHGLYGI) (removed in mature form).

It belongs to the ribosome-inactivating protein family. Type 1 RIP subfamily. Post-translationally, appears to undergo proteolytic cleavage in the C-terminal to produce a shorter protein.

It catalyses the reaction Endohydrolysis of the N-glycosidic bond at one specific adenosine on the 28S rRNA.. Ribosome-inactivating protein of type 1, inhibits protein synthesis in animal cells. This Bryonia dioica (Red bryony) protein is Ribosome-inactivating protein bryodin I.